A 358-amino-acid polypeptide reads, in one-letter code: Feruloyl CoA ortho-hydroxylase F6H1-3 (358 aa).

A Fe2OG dioxygenase domain is found at 200-308 (TKESLLMGSK…RISVPIFVNP (109 aa)). Tyrosine 216 is a binding site for 2-oxoglutarate. Fe cation-binding residues include histidine 231, aspartate 233, and histidine 289. 2 residues coordinate 2-oxoglutarate: arginine 299 and serine 301.

Belongs to the iron/ascorbate-dependent oxidoreductase family. The cofactor is L-ascorbate. Fe(2+) is required as a cofactor. In terms of tissue distribution, mostly expressed in tubers, and, at low levels, in underground stems, stems, leaves and petioles.

It carries out the reaction (E)-feruloyl-CoA + 2-oxoglutarate + O2 = (E)-6-hydroxyferuloyl-CoA + succinate + CO2. It functions in the pathway phenylpropanoid metabolism. Functionally, 2-oxoglutarate (OG)- and Fe(II)-dependent dioxygenase (2OGD) involved in scopoletin biosynthesis. Converts feruloyl CoA into 6'-hydroxyferuloyl CoA, and, at low efficiency, caffeoyl-CoA into 6'-hydroxycaffeate, but has no activity with p-coumaroyl-CoA. The polypeptide is Feruloyl CoA ortho-hydroxylase F6H1-3 (Ipomoea batatas (Sweet potato)).